Consider the following 303-residue polypeptide: Probable alpha-L-glutamate ligase (303 aa).

The region spanning 104 to 287 (LQLLAREGID…IAGMMIEFIE (184 aa)) is the ATP-grasp domain. ATP is bound by residues lysine 141, 178–179 (EY), aspartate 187, and 211–213 (RSN). Residues aspartate 248, glutamate 260, and asparagine 262 each coordinate Mg(2+). Positions 248, 260, and 262 each coordinate Mn(2+).

The protein belongs to the RimK family. Mg(2+) is required as a cofactor. Requires Mn(2+) as cofactor.

The chain is Probable alpha-L-glutamate ligase from Pectobacterium carotovorum subsp. carotovorum (strain PC1).